The primary structure comprises 261 residues: uncharacterized protein (261 aa).

This sequence belongs to the FwdC/FmdC family.

This is an uncharacterized protein from Methanocaldococcus jannaschii (strain ATCC 43067 / DSM 2661 / JAL-1 / JCM 10045 / NBRC 100440) (Methanococcus jannaschii).